A 505-amino-acid chain; its full sequence is Trans-cinnamate 4-monooxygenase C4H2 (505 aa).

Short sequence motifs (nuclear localization signal) lie at residues 161–168 and 247–254; these read VKKMKESN and EKRLKLFK. Cys-447 is a heme binding site.

It belongs to the cytochrome P450 family. Requires heme as cofactor.

It localises to the nucleus. It catalyses the reaction (E)-cinnamate + reduced [NADPH--hemoprotein reductase] + O2 = (E)-4-coumarate + oxidized [NADPH--hemoprotein reductase] + H2O + H(+). It participates in phenylpropanoid metabolism; trans-4-coumarate biosynthesis; trans-4-coumarate from trans-cinnamate: step 1/1. Functionally, component of the floral volatile benzenoid/phenylpropanoid (FVBP) biosynthetic pathway that controls carbon flux to pigments essential for pollination or UV protection, to numerous pytoalexins synthesized by plants when challenged by pathogens, and to lignins. This chain is Trans-cinnamate 4-monooxygenase C4H2, found in Petunia hybrida (Petunia).